A 108-amino-acid polypeptide reads, in one-letter code: Small ribosomal subunit protein uS10 (108 aa).

This sequence belongs to the universal ribosomal protein uS10 family. Part of the 30S ribosomal subunit.

Involved in the binding of tRNA to the ribosomes. This Ehrlichia chaffeensis (strain ATCC CRL-10679 / Arkansas) protein is Small ribosomal subunit protein uS10.